Here is a 198-residue protein sequence, read N- to C-terminus: Molybdenum cofactor guanylyltransferase (198 aa).

GTP is bound by residues 14–16 (LAG), lysine 27, aspartate 73, and aspartate 103. Aspartate 103 contacts Mg(2+).

The protein belongs to the MobA family. In terms of assembly, monomer. It depends on Mg(2+) as a cofactor.

Its subcellular location is the cytoplasm. The catalysed reaction is Mo-molybdopterin + GTP + H(+) = Mo-molybdopterin guanine dinucleotide + diphosphate. Its function is as follows. Transfers a GMP moiety from GTP to Mo-molybdopterin (Mo-MPT) cofactor (Moco or molybdenum cofactor) to form Mo-molybdopterin guanine dinucleotide (Mo-MGD) cofactor. The polypeptide is Molybdenum cofactor guanylyltransferase (Pseudomonas paraeruginosa (strain DSM 24068 / PA7) (Pseudomonas aeruginosa (strain PA7))).